Here is a 101-residue protein sequence, read N- to C-terminus: Small ribosomal subunit protein uS14A (101 aa).

The protein belongs to the universal ribosomal protein uS14 family. Part of the 30S ribosomal subunit. Contacts proteins S3 and S10.

In terms of biological role, binds 16S rRNA, required for the assembly of 30S particles and may also be responsible for determining the conformation of the 16S rRNA at the A site. The sequence is that of Small ribosomal subunit protein uS14A from Mycolicibacterium smegmatis (strain ATCC 700084 / mc(2)155) (Mycobacterium smegmatis).